Reading from the N-terminus, the 476-residue chain is 3-isopropylmalate dehydratase large subunit (476 aa).

[4Fe-4S] cluster is bound by residues cysteine 353, cysteine 413, and cysteine 416.

It belongs to the aconitase/IPM isomerase family. LeuC type 1 subfamily. In terms of assembly, heterodimer of LeuC and LeuD. [4Fe-4S] cluster is required as a cofactor.

It carries out the reaction (2R,3S)-3-isopropylmalate = (2S)-2-isopropylmalate. It participates in amino-acid biosynthesis; L-leucine biosynthesis; L-leucine from 3-methyl-2-oxobutanoate: step 2/4. Catalyzes the isomerization between 2-isopropylmalate and 3-isopropylmalate, via the formation of 2-isopropylmaleate. The sequence is that of 3-isopropylmalate dehydratase large subunit from Yersinia enterocolitica serotype O:8 / biotype 1B (strain NCTC 13174 / 8081).